We begin with the raw amino-acid sequence, 213 residues long: Orotate phosphoribosyltransferase (213 aa).

Lys-26 is a 5-phospho-alpha-D-ribose 1-diphosphate binding site. 34-35 (FF) is an orotate binding site. Residues 72–73 (YK), Arg-99, Lys-100, Lys-103, His-105, and 124–132 (DDVITAGTA) contribute to the 5-phospho-alpha-D-ribose 1-diphosphate site. Orotate is bound by residues Thr-128 and Arg-156.

Belongs to the purine/pyrimidine phosphoribosyltransferase family. PyrE subfamily. Homodimer. Mg(2+) is required as a cofactor.

It catalyses the reaction orotidine 5'-phosphate + diphosphate = orotate + 5-phospho-alpha-D-ribose 1-diphosphate. It functions in the pathway pyrimidine metabolism; UMP biosynthesis via de novo pathway; UMP from orotate: step 1/2. Functionally, catalyzes the transfer of a ribosyl phosphate group from 5-phosphoribose 1-diphosphate to orotate, leading to the formation of orotidine monophosphate (OMP). This chain is Orotate phosphoribosyltransferase, found in Salmonella paratyphi A (strain ATCC 9150 / SARB42).